The following is a 66-amino-acid chain: uncharacterized protein (66 aa).

It to M.jannaschii MJ0582.

This is an uncharacterized protein from Methanocaldococcus jannaschii (strain ATCC 43067 / DSM 2661 / JAL-1 / JCM 10045 / NBRC 100440) (Methanococcus jannaschii).